We begin with the raw amino-acid sequence, 124 residues long: MARIAGVDLPSNKKVEIALTYIYGIGRTTSKKILQATGVDPNKRVKDLTEEEISKLREEIENNYKVEGDLRQEVAANIRRLIEIGCYRGIRHKRGLPVRGQRTRCNARTRKGPRKTVGAKRKEK.

Residues 98 to 124 are disordered; sequence VRGQRTRCNARTRKGPRKTVGAKRKEK.

This sequence belongs to the universal ribosomal protein uS13 family. Part of the 30S ribosomal subunit. Forms a loose heterodimer with protein S19. Forms two bridges to the 50S subunit in the 70S ribosome.

Functionally, located at the top of the head of the 30S subunit, it contacts several helices of the 16S rRNA. In the 70S ribosome it contacts the 23S rRNA (bridge B1a) and protein L5 of the 50S subunit (bridge B1b), connecting the 2 subunits; these bridges are implicated in subunit movement. Contacts the tRNAs in the A and P-sites. The protein is Small ribosomal subunit protein uS13 of Dictyoglomus turgidum (strain DSM 6724 / Z-1310).